We begin with the raw amino-acid sequence, 426 residues long: Trophoblast glycoprotein (426 aa).

Residues 1-31 (MPGAGSRGPSAGDGRLRLARLALVLLGWVSA) form the signal peptide. The Extracellular segment spans residues 32–361 (SAPSSSVPSS…AVLPQSLQTS (330 aa)). Over residues 33-47 (APSSSVPSSSTSPAA) the composition is skewed to low complexity. The tract at residues 33 to 53 (APSSSVPSSSTSPAAFLASGS) is disordered. The region spanning 53-91 (SAQPPPAERCPAACECSEAARTVKCVNRNLLEVPADLPP) is the LRRNT domain. Intrachain disulfides connect Cys62–Cys68 and Cys66–Cys77. LRR repeat units follow at residues 92–113 (YVRN…AFAR), 116–139 (PLAD…GAFE), 141–163 (LPGL…FAFA), 172–210 (PSPL…AALR), 215–238 (LRGL…LLAQ), 239–261 (LPSL…ASFR), and 262–281 (NLTH…VLHN). Asn124 carries N-linked (GlcNAc...) asparagine glycosylation. N-linked (GlcNAc...) asparagine glycosylation occurs at Asn281. The LRRCT domain maps to 289 to 352 (GLAHVKVFLD…LNSSDLDCDA (64 aa)). Intrachain disulfides connect Cys304–Cys329 and Cys306–Cys350. Residues 362-382 (YVFLGIVLALIGAIFLLVLYL) form a helical membrane-spanning segment. Residues 383 to 426 (NRKGIKKWMHNIRDACRDHMEGYHYRYEINADPRLTNLSSNSDV) lie on the Cytoplasmic side of the membrane. Ser424 is modified (phosphoserine).

In terms of processing, highly glycosylated. As to expression, highly expressed in embryo and placenta. In adult, expressed only in brain and ovary. Not detected in kidney small intestine, heart, spleen, testis, liver, lung, thymus and stomach.

The protein resides in the cell membrane. Its function is as follows. May function as an inhibitor of Wnt/beta-catenin signaling by indirectly interacting with LRP6 and blocking Wnt3a-dependent LRP6 internalization. This is Trophoblast glycoprotein (Tpbg) from Mus musculus (Mouse).